The sequence spans 529 residues: N5-hydroxyornithine acetylase sidL (529 aa).

2 disordered regions span residues 59 to 95 and 239 to 258; these read ASVN…VRPF and SPWP…SPVA. Histidine 462 is a binding site for substrate. Glutamate 498 (proton acceptor) is an active-site residue.

Belongs to the lysine N-acyltransferase mbtK family.

It localises to the cytoplasm. The protein localises to the cytosol. The protein operates within siderophore biosynthesis. In terms of biological role, acyltransferase; part of the gene cluster that mediates the biosynthesis of at least 11 siderophores, including beauverichelin A, dimerumic acid (DA), Na-dimethyl coprogen (NADC), eleutherazine B, ferricrocin (FC), fusarinine A, fusarinine C (FsC), metachelin A, mevalonolactone, rhodotorulic acid (RA) and tenellin. This cocktail of siderophores for iron metabolism is essential for virulence, and more specifically for the fungal virulence in penetrating through the host cuticle. Siderophore synthesis is also involved in conidial germination under iron-deficient conditions. SIDL contributes to partial production of ferricrocin under iron-limiting conditions via the acetylation of N(5)-hydroxyornithine. The sequence is that of N5-hydroxyornithine acetylase sidL from Beauveria bassiana (strain ARSEF 2860) (White muscardine disease fungus).